An 89-amino-acid polypeptide reads, in one-letter code: MRPIIAILIALFILLQYQLWFAAGGIVSVHHLNENINHQIMENQKLKDRNTALLADIDDLKHGAEAIEEHARNDLGMIKKNEVFYQIVK.

Over 1-3 (MRP) the chain is Cytoplasmic. A helical membrane pass occupies residues 4-21 (IIAILIALFILLQYQLWF). Residues 22-89 (AAGGIVSVHH…KNEVFYQIVK (68 aa)) lie on the Periplasmic side of the membrane. A coiled-coil region spans residues 29-62 (VHHLNENINHQIMENQKLKDRNTALLADIDDLKH).

This sequence belongs to the FtsB family. As to quaternary structure, part of a complex composed of FtsB, FtsL and FtsQ.

The protein resides in the cell inner membrane. Functionally, essential cell division protein. May link together the upstream cell division proteins, which are predominantly cytoplasmic, with the downstream cell division proteins, which are predominantly periplasmic. The chain is Cell division protein FtsB from Coxiella burnetii (strain RSA 493 / Nine Mile phase I).